The chain runs to 268 residues: Proenkephalin-A (268 aa).

The N-terminal stretch at 1 to 24 (MARLLRLCTWLVALGPGLLATVQA) is a signal peptide. Intrachain disulfides connect C26/C48, C30/C52, and C33/C65. The interval 163–184 (TGDDRDRENHHQEGGDSDEGVS) is disordered. A compositionally biased stretch (basic and acidic residues) spans 164 to 176 (GDDRDRENHHQEG). 2 propeptides span residues 197-208 (SPQVEDEAKELQ) and 218-228 (VGRPEWWMDYQ). A Phosphoserine modification is found at S252.

This sequence belongs to the opioid neuropeptide precursor family. Post-translationally, proenkephalin-A is cleaved by CTSL to generate Met-enkephalin. In terms of processing, processed and degraded by ACE. Probably cleaved by ACE. Post-translationally, processed by ACE to generate Met-enkephalin in the nucleus accumbens of the brain. In terms of processing, the N-terminal domain contains 6 conserved cysteines thought to be involved in disulfide bonding and/or processing.

It is found in the cytoplasmic vesicle. The protein resides in the secretory vesicle. Its subcellular location is the chromaffin granule lumen. The protein localises to the secreted. Neuropeptide that competes with and mimic the effects of opiate drugs. They play a role in a number of physiologic functions, including pain perception and responses to stress. In terms of biological role, met-enkephalin-Arg-Phe neuropeptide acts as a strong ligand of Mu-type opioid receptor OPRM1. Met-enkephalin-Arg-Phe-binding to OPRM1 in the nucleus accumbens of the brain increases activation of OPRM1, leading to long-term synaptic depression of glutamate release. Its function is as follows. Increases glutamate release in the striatum and decreases GABA concentration in the striatum. Functionally, increases glutamate release in the striatum. This chain is Proenkephalin-A (PENK), found in Cavia porcellus (Guinea pig).